A 799-amino-acid polypeptide reads, in one-letter code: RasGAP-activating-like protein 1 (799 aa).

C2 domains follow at residues Met1–Ile105 and Val116–Phe231. Residues Asp21, Asp27, Asp74, Asp76, Asp82, Asp149, Asp155, Asp202, Asp204, and Asp210 each coordinate Ca(2+). Residues Gly316 to Leu544 enclose the Ras-GAP domain. Phosphothreonine is present on Thr400. The region spanning Thr565–Ala672 is the PH domain. The Btk-type zinc finger occupies Asn674–Ala710. The Zn(2+) site is built by His682, Cys693, Cys694, and Cys704.

Ca(2+) is required as a cofactor.

Probable inhibitory regulator of the Ras-cyclic AMP pathway. Plays a role in dendrite formation by melanocytes. This chain is RasGAP-activating-like protein 1, found in Mus musculus (Mouse).